Here is a 369-residue protein sequence, read N- to C-terminus: Omega-amidase, chloroplastic (369 aa).

A chloroplast-targeting transit peptide spans 1 to 63 (MKSAISSSLF…SALRSISSSM (63 aa)). Residue alanine 64 is modified to N-acetylalanine. In terms of domain architecture, CN hydrolase spans 88–337 (FNIGLCQLSV…EAIIIAEIDY (250 aa)). The Proton acceptor role is filled by glutamate 127. The Proton donor role is filled by lysine 201. The Nucleophile role is filled by cysteine 242.

It belongs to the nitrilase superfamily. NIT1/NIT2 family.

The protein localises to the plastid. Its subcellular location is the chloroplast. It carries out the reaction a monoamide of a dicarboxylate + H2O = a dicarboxylate + NH4(+). In terms of biological role, omega-amidase involved in the metabolism of asparagine. Probably also closely coupled with glutamine transamination in the methionine salvage cycle. Can use alpha-ketosuccinamate and alpha-hydroxysuccinamate as substrates, producing respectively oxaloacetate and malate, or alpha-ketoglutaramate, producing alpha-ketoglutarate. The chain is Omega-amidase, chloroplastic from Arabidopsis thaliana (Mouse-ear cress).